Consider the following 266-residue polypeptide: Thiazole synthase (266 aa).

The Schiff-base intermediate with DXP role is filled by Lys107. Residues Gly168, 194–195, and 216–217 each bind 1-deoxy-D-xylulose 5-phosphate; these read AG and NT.

It belongs to the ThiG family. In terms of assembly, homotetramer. Forms heterodimers with either ThiH or ThiS.

It is found in the cytoplasm. It carries out the reaction [ThiS sulfur-carrier protein]-C-terminal-Gly-aminoethanethioate + 2-iminoacetate + 1-deoxy-D-xylulose 5-phosphate = [ThiS sulfur-carrier protein]-C-terminal Gly-Gly + 2-[(2R,5Z)-2-carboxy-4-methylthiazol-5(2H)-ylidene]ethyl phosphate + 2 H2O + H(+). The protein operates within cofactor biosynthesis; thiamine diphosphate biosynthesis. In terms of biological role, catalyzes the rearrangement of 1-deoxy-D-xylulose 5-phosphate (DXP) to produce the thiazole phosphate moiety of thiamine. Sulfur is provided by the thiocarboxylate moiety of the carrier protein ThiS. In vitro, sulfur can be provided by H(2)S. The sequence is that of Thiazole synthase from Azorhizobium caulinodans (strain ATCC 43989 / DSM 5975 / JCM 20966 / LMG 6465 / NBRC 14845 / NCIMB 13405 / ORS 571).